The following is a 548-amino-acid chain: Probable delta-1-pyrroline-5-carboxylate dehydrogenase (548 aa).

Glutamate 298 acts as the Proton acceptor in catalysis. The Nucleophile role is filled by cysteine 332. A phosphoserine mark is found at serine 391, serine 394, and serine 396.

This sequence belongs to the aldehyde dehydrogenase family.

The catalysed reaction is L-glutamate 5-semialdehyde + NAD(+) + H2O = L-glutamate + NADH + 2 H(+). The protein operates within amino-acid degradation; L-proline degradation into L-glutamate; L-glutamate from L-proline: step 2/2. In Schizosaccharomyces pombe (strain 972 / ATCC 24843) (Fission yeast), this protein is Probable delta-1-pyrroline-5-carboxylate dehydrogenase.